A 393-amino-acid chain; its full sequence is Dual-specificity RNA methyltransferase RlmN (393 aa).

Glu114 (proton acceptor) is an active-site residue. Residues 120 to 359 enclose the Radical SAM core domain; that stretch reads EDDRATLCVS…VIVRKTRGDD (240 aa). An intrachain disulfide couples Cys127 to Cys364. Positions 134, 138, and 141 each coordinate [4Fe-4S] cluster. S-adenosyl-L-methionine contacts are provided by residues 188-189, Ser220, 242-244, and Asn321; these read GE and SLH. Cys364 (S-methylcysteine intermediate) is an active-site residue.

It belongs to the radical SAM superfamily. RlmN family. It depends on [4Fe-4S] cluster as a cofactor.

It is found in the cytoplasm. The enzyme catalyses adenosine(2503) in 23S rRNA + 2 reduced [2Fe-2S]-[ferredoxin] + 2 S-adenosyl-L-methionine = 2-methyladenosine(2503) in 23S rRNA + 5'-deoxyadenosine + L-methionine + 2 oxidized [2Fe-2S]-[ferredoxin] + S-adenosyl-L-homocysteine. It carries out the reaction adenosine(37) in tRNA + 2 reduced [2Fe-2S]-[ferredoxin] + 2 S-adenosyl-L-methionine = 2-methyladenosine(37) in tRNA + 5'-deoxyadenosine + L-methionine + 2 oxidized [2Fe-2S]-[ferredoxin] + S-adenosyl-L-homocysteine. Its function is as follows. Specifically methylates position 2 of adenine 2503 in 23S rRNA and position 2 of adenine 37 in tRNAs. m2A2503 modification seems to play a crucial role in the proofreading step occurring at the peptidyl transferase center and thus would serve to optimize ribosomal fidelity. The chain is Dual-specificity RNA methyltransferase RlmN from Actinobacillus pleuropneumoniae serotype 5b (strain L20).